We begin with the raw amino-acid sequence, 93 residues long: DNA-directed RNA polymerase subunit omega (93 aa).

Belongs to the RNA polymerase subunit omega family. The RNAP catalytic core consists of 2 alpha, 1 beta, 1 beta' and 1 omega subunit. When a sigma factor is associated with the core the holoenzyme is formed, which can initiate transcription.

The enzyme catalyses RNA(n) + a ribonucleoside 5'-triphosphate = RNA(n+1) + diphosphate. Its function is as follows. Promotes RNA polymerase assembly. Latches the N- and C-terminal regions of the beta' subunit thereby facilitating its interaction with the beta and alpha subunits. This Actinobacillus pleuropneumoniae serotype 7 (strain AP76) protein is DNA-directed RNA polymerase subunit omega.